Reading from the N-terminus, the 436-residue chain is Acetyl-CoA decarbonylase/synthase complex subunit delta 1 (436 aa).

This sequence belongs to the CdhD family. In terms of assembly, heterodimer of delta and gamma chains. The ACDS complex is made up of alpha, epsilon, beta, gamma and delta chains with a probable stoichiometry of (alpha(2)epsilon(2))(4)-beta(8)-(gamma(1)delta(1))(8) (Potential).

The protein operates within one-carbon metabolism; methanogenesis from acetate. Its function is as follows. Part of a complex that catalyzes the reversible cleavage of acetyl-CoA, allowing growth on acetate as sole source of carbon and energy. Probably maintains the overall quaternary structure of the ACDS complex. The sequence is that of Acetyl-CoA decarbonylase/synthase complex subunit delta 1 (cdhD1) from Methanosarcina acetivorans (strain ATCC 35395 / DSM 2834 / JCM 12185 / C2A).